The following is a 313-amino-acid chain: MKSHQFSTALCQNTTQSNGQPLRFPSPAKLNLFLYINGKLPNGYHELQTLFQFLDFGDWLDISIREQDNQIVLTPEIPNLKTENNLIYRAAKLLQEKANIQLGANIHLDKILPMGGGVGGGSSNAATALVSLNYLWQANLSIDELAKLGLTLGADVPIFVYGQAAFAEGVGEKITYCEPAEKWFVILKPDDSISTAVIFQDPNLPRNTPKKSLEQLLSEPYKNDCEKVVINHYSNVEKALNWLLQYAPARLTGTGACVFAEFDHEAEAQAVFRQKPEAFFGFVAKGLNVSPLHAMLKQLSSTHTHRQSKPEVL.

Lys29 is an active-site residue. 113 to 123 (PMGGGVGGGSS) provides a ligand contact to ATP. Residue Asp155 is part of the active site.

It belongs to the GHMP kinase family. IspE subfamily.

It catalyses the reaction 4-CDP-2-C-methyl-D-erythritol + ATP = 4-CDP-2-C-methyl-D-erythritol 2-phosphate + ADP + H(+). Its pathway is isoprenoid biosynthesis; isopentenyl diphosphate biosynthesis via DXP pathway; isopentenyl diphosphate from 1-deoxy-D-xylulose 5-phosphate: step 3/6. In terms of biological role, catalyzes the phosphorylation of the position 2 hydroxy group of 4-diphosphocytidyl-2C-methyl-D-erythritol. The protein is 4-diphosphocytidyl-2-C-methyl-D-erythritol kinase of Haemophilus influenzae (strain 86-028NP).